We begin with the raw amino-acid sequence, 253 residues long: Imidazole glycerol phosphate synthase subunit HisF (253 aa).

Catalysis depends on residues D11 and D130.

This sequence belongs to the HisA/HisF family. As to quaternary structure, heterodimer of HisH and HisF.

Its subcellular location is the cytoplasm. It carries out the reaction 5-[(5-phospho-1-deoxy-D-ribulos-1-ylimino)methylamino]-1-(5-phospho-beta-D-ribosyl)imidazole-4-carboxamide + L-glutamine = D-erythro-1-(imidazol-4-yl)glycerol 3-phosphate + 5-amino-1-(5-phospho-beta-D-ribosyl)imidazole-4-carboxamide + L-glutamate + H(+). It functions in the pathway amino-acid biosynthesis; L-histidine biosynthesis; L-histidine from 5-phospho-alpha-D-ribose 1-diphosphate: step 5/9. IGPS catalyzes the conversion of PRFAR and glutamine to IGP, AICAR and glutamate. The HisF subunit catalyzes the cyclization activity that produces IGP and AICAR from PRFAR using the ammonia provided by the HisH subunit. This Myxococcus xanthus (strain DK1622) protein is Imidazole glycerol phosphate synthase subunit HisF.